Consider the following 32-residue polypeptide: Kappa-theraphotoxin-Gr2b (32 aa).

Disulfide bonds link Cys2/Cys16, Cys9/Cys21, and Cys15/Cys25.

The protein belongs to the neurotoxin 30 (phrixotoxin) family. In terms of tissue distribution, expressed by the venom gland.

It localises to the secreted. In terms of biological role, binds the voltage-sensor domain of the potassium channel KvAP (from the archaeon Aeropyrum pernix) and affects channel gating. This is Kappa-theraphotoxin-Gr2b from Grammostola rosea (Chilean rose tarantula).